The sequence spans 478 residues: Sporozoite surface protein P36p (478 aa).

The signal sequence occupies residues Met-1 to Phe-41. 6-Cys domains follow at residues Val-42–Thr-178 and Lys-181–Asn-326. Cystine bridges form between Cys-59/Cys-71, Cys-85/Cys-159, Cys-102/Cys-157, Cys-185/Cys-209, Cys-223/Cys-302, and Cys-243/Cys-300. Residues Asn-109 and Asn-138 are each glycosylated (N-linked (GlcNAc...) asparagine). Residues Asn-229, Asn-279, and Asn-291 are each glycosylated (N-linked (GlcNAc...) asparagine). Ser-455 carries GPI-anchor amidated serine lipidation. Residues Ser-456–Thr-478 constitute a propeptide, removed in mature form.

The protein localises to the cell surface. It localises to the cell membrane. In terms of biological role, involved in sporozoite infection of hepatocytes and replication therein. The sequence is that of Sporozoite surface protein P36p (PF52) from Plasmodium falciparum (isolate 3D7).